A 138-amino-acid polypeptide reads, in one-letter code: Protein Turandot B (138 aa).

The signal sequence occupies residues 1-21; it reads MNFKTSLICFALLLIGTLCSA.

The protein belongs to the Turandot family.

It is found in the secreted. Its function is as follows. A humoral factor that may play a role in stress tolerance. This chain is Protein Turandot B, found in Drosophila melanogaster (Fruit fly).